We begin with the raw amino-acid sequence, 384 residues long: Spermidine/putrescine import ATP-binding protein PotA (384 aa).

The region spanning 6–238 (IAFQNVSKVF…PINHFVATFI (233 aa)) is the ABC transporter domain. 40–47 (GASGSGKS) lines the ATP pocket.

It belongs to the ABC transporter superfamily. Spermidine/putrescine importer (TC 3.A.1.11.1) family. As to quaternary structure, the complex is composed of two ATP-binding proteins (PotA), two transmembrane proteins (PotB and PotC) and a solute-binding protein (PotD).

The protein localises to the cell membrane. The enzyme catalyses ATP + H2O + polyamine-[polyamine-binding protein]Side 1 = ADP + phosphate + polyamineSide 2 + [polyamine-binding protein]Side 1.. In terms of biological role, part of the ABC transporter complex PotABCD involved in spermidine/putrescine import. Responsible for energy coupling to the transport system. The polypeptide is Spermidine/putrescine import ATP-binding protein PotA (Streptococcus thermophilus (strain ATCC BAA-250 / LMG 18311)).